Here is a 129-residue protein sequence, read N- to C-terminus: Small ribosomal subunit protein uS11 (129 aa).

The segment at 108–129 is disordered; that stretch reads EDVTPIPHDGTKPKGGKRGRRV.

Belongs to the universal ribosomal protein uS11 family. As to quaternary structure, part of the 30S ribosomal subunit.

Functionally, located on the platform of the 30S subunit. The sequence is that of Small ribosomal subunit protein uS11 from Methanothrix thermoacetophila (strain DSM 6194 / JCM 14653 / NBRC 101360 / PT) (Methanosaeta thermophila).